Reading from the N-terminus, the 86-residue chain is Large ribosomal subunit protein bL27 (86 aa).

The segment at 1-24 (MAHKKGTGSTRNGRDSNSKRLGVK) is disordered.

The protein belongs to the bacterial ribosomal protein bL27 family.

This chain is Large ribosomal subunit protein bL27, found in Prochlorococcus marinus (strain AS9601).